The following is a 270-amino-acid chain: 4-hydroxy-tetrahydrodipicolinate reductase (270 aa).

NAD(+) is bound by residues 8–13 (GALGRM), Asp34, 102–104 (GTT), and 128–131 (SQNY). The active-site Proton donor/acceptor is His160. His161 serves as a coordination point for (S)-2,3,4,5-tetrahydrodipicolinate. Residue Lys164 is the Proton donor of the active site. Residue 170-171 (GT) coordinates (S)-2,3,4,5-tetrahydrodipicolinate.

This sequence belongs to the DapB family.

Its subcellular location is the cytoplasm. The catalysed reaction is (S)-2,3,4,5-tetrahydrodipicolinate + NAD(+) + H2O = (2S,4S)-4-hydroxy-2,3,4,5-tetrahydrodipicolinate + NADH + H(+). The enzyme catalyses (S)-2,3,4,5-tetrahydrodipicolinate + NADP(+) + H2O = (2S,4S)-4-hydroxy-2,3,4,5-tetrahydrodipicolinate + NADPH + H(+). Its pathway is amino-acid biosynthesis; L-lysine biosynthesis via DAP pathway; (S)-tetrahydrodipicolinate from L-aspartate: step 4/4. Its function is as follows. Catalyzes the conversion of 4-hydroxy-tetrahydrodipicolinate (HTPA) to tetrahydrodipicolinate. The protein is 4-hydroxy-tetrahydrodipicolinate reductase of Methanococcus maripaludis (strain DSM 14266 / JCM 13030 / NBRC 101832 / S2 / LL).